Reading from the N-terminus, the 921-residue chain is Levanase (921 aa).

Residues Met1–Ala23 form the signal peptide. Substrate contacts are provided by residues Ser409 to Asp412, Gln428, Trp460 to Ser461, Arg539 to Asp540, Glu591, and Trp679. Asp412 is a catalytic residue.

Belongs to the glycosyl hydrolase 32 family.

It is found in the secreted. The enzyme catalyses Random hydrolysis of (2-&gt;6)-beta-D-fructofuranosidic linkages in (2-&gt;6)-beta-D-fructans (levans) containing more than 3 fructose units.. With respect to regulation, is completely inhibited by low concentrations of heavy metal ions, while Ca(2+) and Mg(2+) or chelating agents such as EDTA neither inhibit nor activate the enzyme to any significant extent. Functionally, catalyzes the hydrolysis of levan with endo-type specificity. The products of levan hydrolysis are a mixture of fructose and a series of fructooligosaccharides up to 12-mer, with levantriose being the major oligosaccharide obtained. Is not active towards sucrose. The chain is Levanase from Bacillus sp. (strain L7).